A 462-amino-acid polypeptide reads, in one-letter code: GTPase Der (462 aa).

2 EngA-type G domains span residues 9–171 (KTIA…GLTK) and 201–372 (IQVG…ECFS). GTP-binding positions include 15–22 (GQPNVGKS), 62–66 (DTGGM), 123–126 (NKID), 207–214 (GRVNVGKS), 254–258 (DTAGI), and 318–321 (NKWD). Residues 373–457 (KRIPTSLLNS…PLIINAKDKK (85 aa)) enclose the KH-like domain.

The protein belongs to the TRAFAC class TrmE-Era-EngA-EngB-Septin-like GTPase superfamily. EngA (Der) GTPase family. In terms of assembly, associates with the 50S ribosomal subunit.

GTPase that plays an essential role in the late steps of ribosome biogenesis. The chain is GTPase Der from Helicobacter acinonychis (strain Sheeba).